Consider the following 61-residue polypeptide: Small ribosomal subunit protein uS14B (61 aa).

Zn(2+) contacts are provided by Cys-24, Cys-27, Cys-40, and Cys-43.

This sequence belongs to the universal ribosomal protein uS14 family. Zinc-binding uS14 subfamily. Part of the 30S ribosomal subunit. Contacts proteins S3 and S10. The cofactor is Zn(2+).

Binds 16S rRNA, required for the assembly of 30S particles and may also be responsible for determining the conformation of the 16S rRNA at the A site. The sequence is that of Small ribosomal subunit protein uS14B from Streptomyces avermitilis (strain ATCC 31267 / DSM 46492 / JCM 5070 / NBRC 14893 / NCIMB 12804 / NRRL 8165 / MA-4680).